A 420-amino-acid polypeptide reads, in one-letter code: ATP phosphoribosyltransferase regulatory subunit (420 aa).

It belongs to the class-II aminoacyl-tRNA synthetase family. HisZ subfamily. In terms of assembly, heteromultimer composed of HisG and HisZ subunits.

It is found in the cytoplasm. The protein operates within amino-acid biosynthesis; L-histidine biosynthesis; L-histidine from 5-phospho-alpha-D-ribose 1-diphosphate: step 1/9. In terms of biological role, required for the first step of histidine biosynthesis. May allow the feedback regulation of ATP phosphoribosyltransferase activity by histidine. The chain is ATP phosphoribosyltransferase regulatory subunit from Bacillus mycoides (strain KBAB4) (Bacillus weihenstephanensis).